We begin with the raw amino-acid sequence, 390 residues long: MTSALEAIRYKRGHLLIIDQLLLPHVTRFIPIRSAEDGWHSIKEMHVRGAPAIAIVAMLSLAVEMSGLVSQQKISKNAEDTRVYIEEKLDYLATSRPTAVNLSDSVRKMKSVLEQKTRTLTCSGEEIAMSFIAYAENMLVHDVADNRSIGEHGANWIVANTPSGVEDSKLCILTHCNTGSLATAGYGTALGIIRHLHEKSQLCHAYCTETRPYNQGARLTAYELVSDQIPATLITDSMAGQLLAKMGQSIAAIVVGADRVASNGDTANKIGTYTLAVLAKYHGVKFVVAAPRTTIDMGTRTGKDIVIEERPHSEVTTITGPRERGDECGNIVMENIKIAADGINVWNPAFDVTPAALIDAIVTEKGVEVKDANGRFHLGSLFETEVRPSN.

D258 functions as the Proton donor in the catalytic mechanism.

This sequence belongs to the eIF-2B alpha/beta/delta subunits family. MtnA subfamily.

Its subcellular location is the cytoplasm. The protein localises to the nucleus. The enzyme catalyses 5-(methylsulfanyl)-alpha-D-ribose 1-phosphate = 5-(methylsulfanyl)-D-ribulose 1-phosphate. The protein operates within amino-acid biosynthesis; L-methionine biosynthesis via salvage pathway; L-methionine from S-methyl-5-thio-alpha-D-ribose 1-phosphate: step 1/6. In terms of biological role, catalyzes the interconversion of methylthioribose-1-phosphate (MTR-1-P) into methylthioribulose-1-phosphate (MTRu-1-P). The polypeptide is Methylthioribose-1-phosphate isomerase (Coccidioides posadasii (strain C735) (Valley fever fungus)).